The chain runs to 1489 residues: WD repeat-containing protein 7 (1489 aa).

WD repeat units lie at residues 17–56 (APTH…EVNP), 62–104 (GHTA…CIEF), 156–199 (ISPD…SGMQ), 324–366 (VICP…EKQE), 404–443 (NEPL…IVQL), 462–507 (GHRN…MKHI), and 558–597 (RHLF…LDRC). 2 disordered regions span residues 754 to 783 (IKEH…YRAS) and 911 to 947 (GDHM…QGQI). A compositionally biased stretch (basic and acidic residues) spans 767-782 (EARRQSREDSDPEYRA). Serine 935 is subject to Phosphoserine. WD repeat units lie at residues 1350 to 1389 (PAIC…CQTI) and 1391 to 1431 (GHKG…LGSI). Phosphoserine is present on serine 1455.

In Mus musculus (Mouse), this protein is WD repeat-containing protein 7 (Wdr7).